A 143-amino-acid polypeptide reads, in one-letter code: Hemoglobin subunit alpha-2 (143 aa).

Serine 2 is modified (N-acetylserine). One can recognise a Globin domain in the interval 2–143 (SLSSKQKATV…LALALAEKYR (142 aa)). Residue histidine 60 participates in O2 binding. Histidine 89 lines the heme b pocket.

The protein belongs to the globin family. Hb 2 is a heterotetramer of two alpha-2 and two beta-2 chains. As to expression, red blood cells.

Its function is as follows. Involved in oxygen transport from gills to the various peripheral tissues. In Gadus morhua (Atlantic cod), this protein is Hemoglobin subunit alpha-2 (hba2).